A 292-amino-acid polypeptide reads, in one-letter code: MGEKSNCRVPEDLFTGLKVTDPQEAECLHPPVSSGKEQHSQSELLKDVDAQPQEDQGEEECFHDASASFETEEPGADKLENKPEDDMNPSELDEEYLMELEKNMPDEEKKRRREESSRLKEEGNEQFKKGDYIEAESSYTRALQTCPSCFQKDRSVLFSNRAAARMKQEKKEMAISDCSKAIQLNPSYIRAILRRAELYEKTDKLDEALEDYKSILEKDPSVHQAREACMRLPKQIEERNERLKEEMLGKLKDLGNLVLRPFGLSTENFQIKQDSSTGSYSINFVQNPNNNR.

The segment at 20–125 is disordered; sequence TDPQEAECLH…SSRLKEEGNE (106 aa). 2 stretches are compositionally biased toward basic and acidic residues: residues 36–49 and 75–85; these read KEQH…KDVD and GADKLENKPED. Residues 86–98 are compositionally biased toward acidic residues; it reads DMNPSELDEEYLM. Phosphoserine is present on S90. The span at 99–125 shows a compositional bias: basic and acidic residues; it reads ELEKNMPDEEKKRRREESSRLKEEGNE. TPR repeat units lie at residues 116–149, 155–188, and 189–222; these read SSRL…CPSC, SVLF…NPSY, and IRAI…DPSV.

In terms of assembly, interacts with the GAP domain of NF1. Interacts (via TPR repeats) with HSP90AA1 and HSPA8.

This chain is Tetratricopeptide repeat protein 1 (TTC1), found in Bos taurus (Bovine).